The sequence spans 177 residues: Large ribosomal subunit protein bL9 (177 aa).

The disordered stretch occupies residues 151-177; it reads VEEEPAEEVEAPAETEVAEDAEEATEA.

Belongs to the bacterial ribosomal protein bL9 family.

Binds to the 23S rRNA. In Maridesulfovibrio salexigens (strain ATCC 14822 / DSM 2638 / NCIMB 8403 / VKM B-1763) (Desulfovibrio salexigens), this protein is Large ribosomal subunit protein bL9.